The following is a 166-amino-acid chain: Transcription antitermination protein NusB (166 aa).

Over residues 1-15 the composition is skewed to basic and acidic residues; it reads MISDDSDRFNPRDPK. Positions 1–30 are disordered; that stretch reads MISDDSDRFNPRDPKPANAGKPSKSAKRRE.

This sequence belongs to the NusB family.

Involved in transcription antitermination. Required for transcription of ribosomal RNA (rRNA) genes. Binds specifically to the boxA antiterminator sequence of the ribosomal RNA (rrn) operons. This chain is Transcription antitermination protein NusB, found in Pseudomonas fluorescens (strain ATCC BAA-477 / NRRL B-23932 / Pf-5).